A 105-amino-acid polypeptide reads, in one-letter code: MPPIILVFFLVLIPASQQYPFSLESLNDQIINEEVIEYMLENSIRSSRTRRVPDEKKIYRCGRRIHSYVFAVCGKACESNTEVNIASKCCREECTDDFIRKQCCP.

The N-terminal stretch at 1–18 (MPPIILVFFLVLIPASQQ) is a signal peptide. Positions 19–57 (YPFSLESLNDQIINEEVIEYMLENSIRSSRTRRVPDEKK) are excised as a propeptide. Intrachain disulfides connect Cys-61–Cys-90, Cys-73–Cys-103, Cys-77–Cys-104, and Cys-89–Cys-94.

The protein belongs to the insulin family.

It is found in the secreted. In terms of biological role, insulin-like peptide which plays a role in ageing as a consequence of daf-16 activity. The chain is Insulin-like peptide 7 from Caenorhabditis elegans.